The chain runs to 222 residues: CASP-like protein 1E1 (222 aa).

The Cytoplasmic segment spans residues 1–59 (MEASRVKPGFNGVGMAAGSVNGSSRRPGPGLGYGYGYYMGSGAAAGGSGRAAQAPVDGC). The chain crosses the membrane as a helical span at residues 60-80 (SVALRVFVVASTLVSAVVMGV). The Extracellular portion of the chain corresponds to 81–110 (DRQTRTIQITITDALPPLEVPLTANWSYSS). The N-linked (GlcNAc...) asparagine glycan is linked to N105. The helical transmembrane segment at 111–131 (AFVYFVVANAMVCLFSAAALA) threads the bilayer. Over 132–146 (ACRSRAAMVPVMVGD) the chain is Cytoplasmic. A helical transmembrane segment spans residues 147–167 (LLALALLYSAVGAAAEFGILG). At 168–189 (ERGNSHVRWAKVCNVYGRFCDR) the chain is on the extracellular side. A helical transmembrane segment spans residues 190–210 (AMAAVIVSLIGAFANLVLLML). Over 211 to 222 (NILTIHKSSSYY) the chain is Cytoplasmic.

The protein belongs to the Casparian strip membrane proteins (CASP) family. In terms of assembly, homodimer and heterodimers.

The protein localises to the cell membrane. This chain is CASP-like protein 1E1, found in Sorghum bicolor (Sorghum).